The chain runs to 366 residues: L-tyrosine C(3)-methyltransferase (366 aa).

A compositionally biased stretch (polar residues) spans 1–12; the sequence is MTISLENTTVGQ. Positions 1 to 22 are disordered; sequence MTISLENTTVGQNPAGGPPTGK. Glu-223 is an S-adenosyl-L-methionine binding site.

This sequence belongs to the class I-like SAM-binding methyltransferase superfamily. Cation-independent O-methyltransferase family.

The enzyme catalyses L-tyrosine + S-adenosyl-L-methionine = 3-methyl-L-tyrosine + S-adenosyl-L-homocysteine + H(+). Its pathway is antibiotic biosynthesis. Functionally, C-methyltransferase that mediates the methylation of tyrosine into 3-methyl-L-tyrosine (3-Me-Tyr) in biosynthesis of saframycin A, a potent antitumor antibiotic that belongs to the tetrahydroisoquinoline family. Involved in biosynthesis of 3-hydroxy-5-methyl-O-methyltyrosine (3-OH-5-Me-OMe-Tyr), a core structure of saframycin A. The polypeptide is L-tyrosine C(3)-methyltransferase (Streptomyces lavendulae).